The primary structure comprises 759 residues: Na(+)/H(+) exchanger beta (759 aa).

At 1–14 the chain is on the cytoplasmic side; that stretch reads MPAFSCAFPGCRRD. A helical membrane pass occupies residues 15–34; sequence LLVIVLVVFVGIGLPIEASA. The Extracellular segment spans residues 35–75; the sequence is PAYQSHGTEGSHLTNITNTKKAFPVLAVNYEHVRKPFEIAL. N-linked (GlcNAc...) asparagine glycosylation is present at Asn49. The chain crosses the membrane as a helical span at residues 76-95; it reads WILLALLMKLGFHLIPRLSA. At 96–97 the chain is on the cytoplasmic side; that stretch reads VV. A helical transmembrane segment spans residues 98 to 117; that stretch reads PESCLLIVVGLLVGGLIKVI. Residues 118–122 are Extracellular-facing; that stretch reads GEEPP. Residues 123–142 traverse the membrane as a helical segment; the sequence is VLDSQLFFLCLLPPIILDAG. Over 143–149 the chain is Cytoplasmic; the sequence is YFLPIRP. Residues 150-169 form a helical membrane-spanning segment; sequence FTENVGTILVFAVIGTLWNA. Residues 170-195 are Extracellular-facing; it reads FFMGGLLYALCQIESVGLSGVDLLAC. The chain crosses the membrane as a helical span at residues 196-214; it reads LLFGSIVSAVDPVAVLAVF. Residues 215-225 are Cytoplasmic-facing; it reads EEIHINELVHI. Residues 226–244 form a helical membrane-spanning segment; that stretch reads LVFGESLLNDAVTVVLYNL. Topologically, residues 245–261 are extracellular; the sequence is FEEFSKVGTVTVLDVFL. A helical transmembrane segment spans residues 262–282; sequence GVVCFFVVSLGGVLVGAIYGF. Topologically, residues 283-311 are cytoplasmic; that stretch reads LAAFTSRFTSHTRVIEPLFVFLYSYMAYL. The helical transmembrane segment at 312-330 threads the bilayer; the sequence is SSEMFHLSGIMALIACGVV. Over 331-352 the chain is Extracellular; that stretch reads MRPYVEANISHKSYTTIKYFLK. Residue Asn338 is glycosylated (N-linked (GlcNAc...) asparagine). A helical membrane pass occupies residues 353–372; sequence MWSSVSETLIFIFLGVSTVA. The Cytoplasmic portion of the chain corresponds to 373–376; it reads GPHA. The helical transmembrane segment at 377–398 threads the bilayer; that stretch reads WNWTFVITTVILCLVSRVLGVI. Over 399 to 446 the chain is Extracellular; sequence GLTFIINKFRIVKLTKKDQFIVAYGGLRGAIAFSLGYLLSNSHQMRNL. A helical membrane pass occupies residues 447-467; that stretch reads FLTAIITVIFFTVFVQGMTIR. At 468–759 the chain is on the cytoplasmic side; it reads PLVELLAVKK…KEDDDPFMSC (292 aa). 2 positions are modified to phosphoserine; by PKA: Ser641 and Ser648. The segment at 681–759 is disordered; the sequence is FPTVHFEQPS…KEDDDPFMSC (79 aa). The segment covering 707-719 has biased composition (basic and acidic residues); sequence VPKRPSLKADIEG.

The protein belongs to the monovalent cation:proton antiporter 1 (CPA1) transporter (TC 2.A.36) family. In terms of processing, activated by cAMP, protein kinase A and protein kinase C.

Its subcellular location is the basolateral cell membrane. Functionally, involved in pH regulation to eliminate acids generated by active metabolism or to counter adverse environmental conditions. Major proton extruding system driven by the inward sodium ion chemical gradient. The sequence is that of Na(+)/H(+) exchanger beta from Oncorhynchus mykiss (Rainbow trout).